Consider the following 159-residue polypeptide: MSDEEHHFESKADAGASKTYPQQAGTIRKNGHIVIKNRPCKVVEVSTSKTGKHGHAKCHFVAIDIFTGKKLEDIVPSSHNCDVPHVNRTDYQLIDISEDGFVSLLTENGNTKDDLRLPTDDNLLALIKDGFAEGKDLVLSVMSAMGEEQICGIKDVGPK.

The segment covering 1–12 (MSDEEHHFESKA) has biased composition (basic and acidic residues). Residues 1–23 (MSDEEHHFESKADAGASKTYPQQ) form a disordered region. K52 is modified (hypusine).

Belongs to the eIF-5A family. In terms of processing, lys-52 undergoes hypusination, a unique post-translational modification that consists in the addition of a butylamino group from spermidine to lysine side chain, leading to the formation of the unusual amino acid hypusine. eIF-5As are the only known proteins to undergo this modification, which is essential for their function.

Its function is as follows. Translation factor that promotes translation elongation and termination, particularly upon ribosome stalling at specific amino acid sequence contexts. Binds between the exit (E) and peptidyl (P) site of the ribosome and promotes rescue of stalled ribosome: specifically required for efficient translation of polyproline-containing peptides as well as other motifs that stall the ribosome. Acts as a ribosome quality control (RQC) cofactor by joining the RQC complex to facilitate peptidyl transfer during CAT tailing step. The polypeptide is Eukaryotic translation initiation factor 5A-1 (EIF-5A1) (Nicotiana plumbaginifolia (Leadwort-leaved tobacco)).